The following is a 172-amino-acid chain: Envelope protein UL45 (172 aa).

Residues 1–27 lie on the Intravirion side of the membrane; that stretch reads MPLRASEHAYRPLGPGTPPMRARLPAA. The helical; Signal-anchor for type II membrane protein transmembrane segment at 28 to 48 threads the bilayer; sequence AWVGVGTIIGGVVIIAALVLV. Topologically, residues 49–172 are virion surface; it reads PSRASWALSP…TSTRNALGLP (124 aa).

Belongs to the herpesviridae HHV-1 UL45 family.

The protein localises to the virion membrane. In terms of biological role, important virulence factor of HSV neurotropism. Seems to be required for glycoprotein B-induced fusion. Dispensable for growth in vitro. The protein is Envelope protein UL45 of Human herpesvirus 1 (strain 17) (HHV-1).